A 115-amino-acid polypeptide reads, in one-letter code: NADH-ubiquinone oxidoreductase chain 3 (115 aa).

A run of 3 helical transmembrane segments spans residues 3-23 (LVIA…VAFW), 55-75 (FFLV…LLPI), and 87-107 (LLSL…YEWL).

This sequence belongs to the complex I subunit 3 family. Core subunit of respiratory chain NADH dehydrogenase (Complex I) which is composed of 45 different subunits. Interacts with TMEM186. Interacts with TMEM242.

The protein localises to the mitochondrion inner membrane. The catalysed reaction is a ubiquinone + NADH + 5 H(+)(in) = a ubiquinol + NAD(+) + 4 H(+)(out). Core subunit of the mitochondrial membrane respiratory chain NADH dehydrogenase (Complex I) which catalyzes electron transfer from NADH through the respiratory chain, using ubiquinone as an electron acceptor. Essential for the catalytic activity of complex I. The sequence is that of NADH-ubiquinone oxidoreductase chain 3 from Ornithorhynchus anatinus (Duckbill platypus).